A 493-amino-acid chain; its full sequence is Serine/threonine-protein kinase PBL34 (493 aa).

Disordered stretches follow at residues 1–42 and 84–117; these read MGLD…EEEE and SKSA…TPVI. Gly2 carries the N-myristoyl glycine lipid modification. A compositionally biased stretch (basic and acidic residues) spans 12-37; the sequence is WKSEKPKETENKNHKKKNGDDNKSRN. Over residues 100–114 the composition is skewed to low complexity; that stretch reads SSTTTTSNAESSSST. The residue at position 131 (Thr131) is a Phosphothreonine. A Protein kinase domain is found at 142 to 428; sequence FRPESLLGEG…VEALKPLPHL (287 aa). Residues 148–156 and Lys180 contribute to the ATP site; that span reads LGEGGFGCV. Residue Tyr225 is modified to Phosphotyrosine. The Proton acceptor role is filled by Asp275. At Ser279 the chain carries Phosphoserine. Residue Thr306 is modified to Phosphothreonine. Ser309 is subject to Phosphoserine. 2 positions are modified to phosphothreonine: Thr310 and Thr315. Tyr323 is subject to Phosphotyrosine. The segment at 447–493 is disordered; that stretch reads KNGSGRSQGFGSRNGQHQPVFRTLSSPHGSSPYRHQIPSPKPKGATT. A compositionally biased stretch (polar residues) spans 450 to 475; it reads SGRSQGFGSRNGQHQPVFRTLSSPHG.

The protein belongs to the protein kinase superfamily. Ser/Thr protein kinase family. In terms of assembly, interacts with the Xanthomonas campestris effector XopAC/AvrAC. Interacts with SD129. Post-translationally, phosphorylated by SD129 at Thr-306 and Thr-310 in response to the pathogen-associated molecular pattern (PAMP) 3-OH-C10:0, a medium-chain 3-hydroxy fatty acid.

Its subcellular location is the cell membrane. The catalysed reaction is L-seryl-[protein] + ATP = O-phospho-L-seryl-[protein] + ADP + H(+). It carries out the reaction L-threonyl-[protein] + ATP = O-phospho-L-threonyl-[protein] + ADP + H(+). Involved in chitin-triggered immune signaling and is required for reactive oxygen species (ROS) production. Acts downstream of SD129 in defense signaling triggered by the pathogen-associated molecular pattern (PAMP) 3-OH-C10:0, a medium-chain 3-hydroxy fatty acid. In Arabidopsis thaliana (Mouse-ear cress), this protein is Serine/threonine-protein kinase PBL34.